The primary structure comprises 373 residues: Dual-specificity RNA methyltransferase RlmN (373 aa).

The active-site Proton acceptor is Glu-94. The Radical SAM core domain occupies Glu-100–Asp-339. A disulfide bridge connects residues Cys-107 and Cys-344. Cys-114, Cys-118, and Cys-121 together coordinate [4Fe-4S] cluster. Residues Gly-168–Glu-169, Ser-200, Ser-222–His-224, and Asn-301 contribute to the S-adenosyl-L-methionine site. The active-site S-methylcysteine intermediate is the Cys-344.

Belongs to the radical SAM superfamily. RlmN family. The cofactor is [4Fe-4S] cluster.

It is found in the cytoplasm. The enzyme catalyses adenosine(2503) in 23S rRNA + 2 reduced [2Fe-2S]-[ferredoxin] + 2 S-adenosyl-L-methionine = 2-methyladenosine(2503) in 23S rRNA + 5'-deoxyadenosine + L-methionine + 2 oxidized [2Fe-2S]-[ferredoxin] + S-adenosyl-L-homocysteine. It catalyses the reaction adenosine(37) in tRNA + 2 reduced [2Fe-2S]-[ferredoxin] + 2 S-adenosyl-L-methionine = 2-methyladenosine(37) in tRNA + 5'-deoxyadenosine + L-methionine + 2 oxidized [2Fe-2S]-[ferredoxin] + S-adenosyl-L-homocysteine. Specifically methylates position 2 of adenine 2503 in 23S rRNA and position 2 of adenine 37 in tRNAs. m2A2503 modification seems to play a crucial role in the proofreading step occurring at the peptidyl transferase center and thus would serve to optimize ribosomal fidelity. In Vibrio cholerae serotype O1 (strain M66-2), this protein is Dual-specificity RNA methyltransferase RlmN.